Consider the following 467-residue polypeptide: Protein PHOSPHATE STARVATION RESPONSE 3 (467 aa).

The interval 227-266 (MSLPVSSCSDQEDLQDARSPAKVQLSSSRSSSGTASCNKP) is disordered. In terms of domain architecture, HTH myb-type spans 262 to 322 (SCNKPRLRWT…HLQKYRLAKY (61 aa)). The segment at residues 293-318 (PKGVLKLMKVEGLTIYHIKSHLQKYR) is a DNA-binding region (H-T-H motif). The segment covering 327–337 (KEDKKQEEKKT) has biased composition (basic and acidic residues). Disordered stretches follow at residues 327–353 (KEDKKQEEKKTKSVANGNDHAKKKSAQ) and 400–467 (RESI…VHDE). The segment covering 402–412 (SISSMTSTTEG) has biased composition (polar residues). Composition is skewed to basic and acidic residues over residues 419-428 (PMEKTEDKAE) and 438-467 (RITDTDAECHSKVDNKKTKPQADLEMVHDE).

In terms of tissue distribution, expressed in the root cap and in the exodermis of the root, in the root tip of lateral roots, in the mesophyll cells of the leaf, in pollen, vascular cylinder of the anther and the veins of the lemma, palea and pistils, and in the xylem and phloem regions of large vascular bundles, small vascular bundles and diffuse vascular bundles in node I.

It is found in the nucleus. Its function is as follows. Transcription factor involved in phosphate starvation signaling. Binds to P1BS, an imperfect palindromic sequence 5'-GNATATNC-3', to promote the expression of inorganic phosphate (Pi) starvation-responsive genes. Functionally redundant with PHR1 and PHR2 in regulating Pi starvation response and Pi homeostasis. This Oryza sativa subsp. japonica (Rice) protein is Protein PHOSPHATE STARVATION RESPONSE 3.